We begin with the raw amino-acid sequence, 179 residues long: Natural killer cells antigen CD94 (179 aa).

Residues 1–10 (MAVSQTTLWN) lie on the Cytoplasmic side of the membrane. Residues 11–31 (LISGILGVICLLLMTTMGILL) form a helical; Signal-anchor for type II membrane protein membrane-spanning segment. The Extracellular portion of the chain corresponds to 32–179 (KNLLLTESIQ…SRFICKQELM (148 aa)). 4 disulfides stabilise this stretch: Cys58–Cys70, Cys61–Cys72, Cys89–Cys174, and Cys152–Cys166. In terms of domain architecture, C-type lectin spans 68-175 (HQCNCYLFFD…CEDKSRFICK (108 aa)). 2 N-linked (GlcNAc...) asparagine glycosylation sites follow: Asn93 and Asn125.

As to quaternary structure, can form disulfide-bonded heterodimer with NKG2 family members KLRC1 and KLRC2. KLRD1-KLRC1 heterodimer interacts with peptide-bound MHC-E-B2M heterotrimeric complex. KLRD1 plays a prominent role in directly interacting with MHC-E. KLRD1-KLRC1 interacts with much higher affinity with peptide-bound MHC-E-B2M than KLRD1-KLRC2. Interacts with the adapter protein TYROBP/DAP12; this interaction is required for cell surface expression and cell activation.

The protein localises to the cell membrane. Its function is as follows. Immune receptor involved in self-nonself discrimination. In complex with KLRC1 or KLRC2 on cytotoxic and regulatory lymphocyte subsets, recognizes non-classical major histocompatibility (MHC) class Ib molecule MHC-E loaded with self-peptides derived from the signal sequence of classical MHC class Ia and non-classical MHC class Ib molecules. Enables cytotoxic cells to monitor the expression of MHC class I molecules in healthy cells and to tolerate self. Primarily functions as a ligand binding subunit as it lacks the capacity to signal. Functionally, KLRD1-KLRC1 acts as an immune inhibitory receptor. Key inhibitory receptor on natural killer (NK) cells that regulates their activation and effector functions. Dominantly counteracts T cell receptor signaling on a subset of memory/effector CD8-positive T cells as part of an antigen-driven response to avoid autoimmunity. On intraepithelial CD8-positive gamma-delta regulatory T cells triggers TGFB1 secretion, which in turn limits the cytotoxic programming of intraepithelial CD8-positive alpha-beta T cells, distinguishing harmless from pathogenic antigens. In MHC-E-rich tumor microenvironment, acts as an immune inhibitory checkpoint and may contribute to progressive loss of effector functions of NK cells and tumor-specific T cells, a state known as cell exhaustion. Upon MHC-E-peptide binding, transmits intracellular signals through KLRC1 immunoreceptor tyrosine-based inhibition motifs (ITIMs) by recruiting INPP5D/SHIP-1 and INPPL1/SHIP-2 tyrosine phosphatases to ITIMs, and ultimately opposing signals transmitted by activating receptors through dephosphorylation of proximal signaling molecules. KLRD1-KLRC2 acts as an immune activating receptor. On cytotoxic lymphocyte subsets recognizes MHC-E loaded with signal sequence-derived peptides from non-classical MHC class Ib MHC-G molecules, likely playing a role in the generation and effector functions of adaptive NK cells and in maternal-fetal tolerance during pregnancy. Regulates the effector functions of terminally differentiated cytotoxic lymphocyte subsets, and in particular may play a role in adaptive NK cell response to viral infection. Upon MHC-E-peptide binding, transmits intracellular signals via the adapter protein TYROBP/DAP12, triggering the phosphorylation of proximal signaling molecules and cell activation. In Canis lupus familiaris (Dog), this protein is Natural killer cells antigen CD94 (KLRD1).